We begin with the raw amino-acid sequence, 398 residues long: Phosphoglycerate kinase (398 aa).

Residues 21–23, R36, 59–62, R119, and R157 each bind substrate; these read DFN and HLGR. Residues K208, G296, E327, and 354 to 357 each bind ATP; that span reads GGDS.

The protein belongs to the phosphoglycerate kinase family. As to quaternary structure, monomer.

Its subcellular location is the cytoplasm. The enzyme catalyses (2R)-3-phosphoglycerate + ATP = (2R)-3-phospho-glyceroyl phosphate + ADP. It functions in the pathway carbohydrate degradation; glycolysis; pyruvate from D-glyceraldehyde 3-phosphate: step 2/5. This Streptococcus equi subsp. zooepidemicus (strain H70) protein is Phosphoglycerate kinase.